Here is a 115-residue protein sequence, read N- to C-terminus: MKFLKKQARLRRATKFRAKHAKKDIERLCIHKTAQHIYAQIISSCGTKILASASTLKAKLKNGGNVDAAVKVGEAIAKAATSVKVKKVAFDRSGFKYHGRVKALADAAREGGLDF.

The protein belongs to the universal ribosomal protein uL18 family. Part of the 50S ribosomal subunit; part of the 5S rRNA/L5/L18/L25 subcomplex. Contacts the 5S and 23S rRNAs.

Its function is as follows. This is one of the proteins that bind and probably mediate the attachment of the 5S RNA into the large ribosomal subunit, where it forms part of the central protuberance. The polypeptide is Large ribosomal subunit protein uL18 (Vesicomyosocius okutanii subsp. Calyptogena okutanii (strain HA)).